The sequence spans 131 residues: Protein GLUTAMINE DUMPER 5 (131 aa).

Over 1–34 the chain is Extracellular; sequence MRQFPSIRGNINEKMMTTMVESQTRSPWRTPVPY. Residues 35-55 form a helical membrane-spanning segment; sequence LFGGLAAMLGLIAFALLLLAC. Residues 56–131 are Cytoplasmic-facing; the sequence is SYWRLSRQTE…GESKVTEENH (76 aa). The VIMAG motif lies at 88–92; the sequence is VIMAG.

This sequence belongs to the GLUTAMINE DUMPER 1 (TC 9.B.60) family. As to expression, expressed in the vascular tissues. Also detected in guard cells.

It localises to the membrane. Functionally, probable subunit of an amino acid transporter involved in the regulation of the amino acid metabolism. Stimulates amino acid export by activating nonselective amino acid facilitators. The polypeptide is Protein GLUTAMINE DUMPER 5 (GDU5) (Arabidopsis thaliana (Mouse-ear cress)).